The primary structure comprises 752 residues: Zinc finger protein 425 (752 aa).

Positions 9–80 (VTFDDVALYF…EQGCLDKTRR (72 aa)) constitute a KRAB domain. 19 C2H2-type zinc fingers span residues 190 to 212 (YSCY…KRSH), 246 to 268 (FQCS…QVVH), 274 to 296 (YPCP…LCLH), 302 to 324 (FCCG…LRLH), 330 to 352 (FQCP…LTQH), 358 to 380 (FHCP…QRTH), 386 to 408 (FSCG…IRVH), 414 to 436 (FSCP…GLQH), 442 to 464 (FQCP…QRLH), 470 to 492 (FPCA…TRVH), 498 to 520 (FPCG…LKVH), 526 to 548 (FSCA…TRLH), 554 to 576 (FQCP…QRMH), 582 to 604 (FACG…LRLH), 610 to 632 (YQCP…LLQH), 638 to 660 (FSCV…IRVH), 666 to 688 (FQCP…LYKH), 694 to 716 (FQCP…LCLH), and 722 to 744 (FSCD…IAVH).

The protein belongs to the krueppel C2H2-type zinc-finger protein family.

It localises to the nucleus. The protein localises to the cytoplasm. Acts as a transcriptional repressor. This Homo sapiens (Human) protein is Zinc finger protein 425 (ZNF425).